Reading from the N-terminus, the 257-residue chain is NAD-capped RNA hydrolase NudC (257 aa).

Substrate is bound at residue arginine 69. Zn(2+) is bound by residues cysteine 98 and cysteine 101. A substrate-binding site is contributed by glutamate 111. 2 residues coordinate Zn(2+): cysteine 116 and cysteine 119. Residue tyrosine 124 coordinates substrate. The Nudix hydrolase domain occupies 125–248 (PQIAPCIIVA…TVARRLIEDT (124 aa)). 3 residues coordinate a divalent metal cation: alanine 158, glutamate 174, and glutamate 178. The Nudix box signature appears at 159–180 (GFVEVGETLEQAVAREVMEESG). 192–199 (QPWPFPQS) contacts substrate. Position 219 (glutamate 219) interacts with a divalent metal cation. Alanine 241 contacts substrate.

This sequence belongs to the Nudix hydrolase family. NudC subfamily. As to quaternary structure, homodimer. Mg(2+) is required as a cofactor. The cofactor is Mn(2+). Requires Zn(2+) as cofactor.

The catalysed reaction is a 5'-end NAD(+)-phospho-ribonucleoside in mRNA + H2O = a 5'-end phospho-adenosine-phospho-ribonucleoside in mRNA + beta-nicotinamide D-ribonucleotide + 2 H(+). It carries out the reaction NAD(+) + H2O = beta-nicotinamide D-ribonucleotide + AMP + 2 H(+). It catalyses the reaction NADH + H2O = reduced beta-nicotinamide D-ribonucleotide + AMP + 2 H(+). Functionally, mRNA decapping enzyme that specifically removes the nicotinamide adenine dinucleotide (NAD) cap from a subset of mRNAs by hydrolyzing the diphosphate linkage to produce nicotinamide mononucleotide (NMN) and 5' monophosphate mRNA. The NAD-cap is present at the 5'-end of some mRNAs and stabilizes RNA against 5'-processing. Has preference for mRNAs with a 5'-end purine. Catalyzes the hydrolysis of a broad range of dinucleotide pyrophosphates. This Salmonella dublin (strain CT_02021853) protein is NAD-capped RNA hydrolase NudC.